A 110-amino-acid polypeptide reads, in one-letter code: Serum amyloid A protein (110 aa).

The disordered stretch occupies residues 73–110 (GGSGRGAEDSRADQAANEWGRSGKDPNHFRPHGLPDKY). Residues 93–110 (RSGKDPNHFRPHGLPDKY) are compositionally biased toward basic and acidic residues.

The protein belongs to the SAA family. In terms of processing, this protein is the precursor of amyloid protein A, which is formed by the removal of residues from the C-terminal end. In terms of tissue distribution, expressed by the liver; secreted in plasma.

Its function is as follows. Major acute phase reactant. Apolipoprotein of the HDL complex. The polypeptide is Serum amyloid A protein (SAA1) (Equus caballus (Horse)).